Here is a 55-residue protein sequence, read N- to C-terminus: Small ribosomal subunit protein eS31 (55 aa).

Residues Cys-21, Cys-24, Cys-39, and Cys-42 each contribute to the Zn(2+) site. The C4-type zinc finger occupies Cys-21 to Cys-42.

The protein belongs to the eukaryotic ribosomal protein eS31 family. In terms of assembly, part of the 30S ribosomal subunit. The cofactor is Zn(2+).

This Thermoplasma volcanium (strain ATCC 51530 / DSM 4299 / JCM 9571 / NBRC 15438 / GSS1) protein is Small ribosomal subunit protein eS31.